The chain runs to 247 residues: Sortase A (247 aa).

The Cytoplasmic segment spans residues M1–G9. The helical transmembrane segment at F10–V30 threads the bilayer. Residues F31–L247 lie on the Extracellular side of the membrane. H140 (proton donor/acceptor) is an active-site residue. C206 acts as the Acyl-thioester intermediate in catalysis.

It belongs to the bacterial sortase family. Class A subfamily.

The protein localises to the cell membrane. In terms of biological role, transpeptidase that anchors surface proteins to the cell wall. Recognizes and modifies its substrate by proteolytic cleavage of a C-terminal sorting signal. Following cleavage, a covalent intermediate is formed via a thioester bond between the sortase and its substrate, which is then transferred and covalently attached to the cell wall. This sortase recognizes a Leu-Pro-x-Thr-Gly (LPXTG) motif, which is cleaved by the sortase between the threonine and glycine residues. Essential for adherence to eukaryotic cells and for binding to fibronectin and fibrinogen. The polypeptide is Sortase A (Streptococcus agalactiae serotype III (strain NEM316)).